Here is a 357-residue protein sequence, read N- to C-terminus: Cyclin-dependent kinase-like 1 (357 aa).

Residues 4–287 enclose the Protein kinase domain; sequence YEKIGKIGEG…CEQLLHHPYF (284 aa). Residues 10–18 and Lys-33 each bind ATP; that span reads IGEGSYGVV. Residues 45 to 51 carry the [NKR]KIAxRE motif; sequence KKIALRE. Asp-126 acts as the Proton acceptor in catalysis.

The protein belongs to the protein kinase superfamily. CMGC Ser/Thr protein kinase family. CDC2/CDKX subfamily. As to expression, highly expressed in kidney, and to a lower extent in ovary.

It localises to the cytoplasm. The protein localises to the nucleus. It carries out the reaction L-seryl-[protein] + ATP = O-phospho-L-seryl-[protein] + ADP + H(+). The catalysed reaction is L-threonyl-[protein] + ATP = O-phospho-L-threonyl-[protein] + ADP + H(+). The protein is Cyclin-dependent kinase-like 1 of Homo sapiens (Human).